Reading from the N-terminus, the 181-residue chain is TATA-box-binding protein (181 aa).

2 consecutive repeat copies span residues Ile7 to Leu83 and Val98 to Leu173.

The protein belongs to the TBP family.

Functionally, general factor that plays a role in the activation of archaeal genes transcribed by RNA polymerase. Binds specifically to the TATA box promoter element which lies close to the position of transcription initiation. In Methanococcus vannielii (strain ATCC 35089 / DSM 1224 / JCM 13029 / OCM 148 / SB), this protein is TATA-box-binding protein.